A 1435-amino-acid chain; its full sequence is MGARASVLSGGKLDKWEKIRLRPGGKKKYRLKHIVWASRELERYALNPGLLETSEGCKQIIGQLQPAIQTGTEELRSLYNTVATLYCVHKGIDVKDTKEALEKMEEEQNKSKKKAQQAAADTGNNSQVSQNYPIVQNLQGQMVHQAISPRTLNAWVKVIEEKAFSPEVIPMFSALSEGATPQDLNTMLNTVGGHQAAMQMLKETINEEAAEWDRLHPVHAGPIAPGQMREPRGSDIAGTTSTLQEQIAWMTSNPPIPVGEIYKRWIIVGLNKIVRMYSPVSILDIRQGPKEPFRDYVDRFYKTLRAEQASQDVKNWMTETLLVQNANPDCKTILKALGPQATLEEMMTACQGVGGPSHKARVLAEAMSQATNSVTTAMMQRGNFKGPRKIIKCFNCGKEGHIAKNCRAPRKKGCWRCGKEGHQLKDCTERQANFLRENLAFPQGKAGELSPKQTRANSPTSRELRVWGRDNPLSKTGAERQGTVSFNFPQITLWQRPLVAIKIGGQLKEALLDTGADDTVLEEMNLPGKWKPKMIGGIGGFIKVRQYDQIPIEICGQKAIGTVLVGPTPVNIIGRNLLTQIGCTLNFPISPIETVPVKLKPGMDGPKVKQWPLTEEKIKALTEICTDMEKEGKISRIGPENPYNTPIFAIKKKDSTKWRKLVDFRELNKRTQDFWEVQLGIPHPAGLKKKKSVTVLDVGDAYFSVPLDEDFRKYTAFTISSINNETPGIRYQYNVLPQGWKGSPAIFQSSMTKILEPFRKQNPEMVIYQYMDDLYVGSDLEIGQHRTKIEKLREHLLRWGFTRPDKKHQKEPPFLWMGYELHPDKWTVQSIKLPEKESWTVNDIQNLVERLNWASQIYPGIKVRQLCKLLRGTKALTEVIPLTEEAELELAENREILKEPVHGVYYDPSKDLIAEIQKQGHGQWTYQIYQEPFKNLKTGKYARMRGAHTNDVKQLAEAVQRISTESIVIWGRTPKFRLPIQKETWETWWAEYWQATWIPEWEFVNTPPLVKLWYQLEKEPIIGAETFYVDGAANRETKLGKAGYVTDRGRQKVVPLTDTTNQKTELQAINLALQDSGLEVNIVTDSQYALGIIQAQPDKSESELVNQIIEQLIKKEKVYLAWVPAHKGIGGNEQVDKLVSQGIRKVLFLDGIDKAQEEHEKYHNNWRAMASDFNLPPVVAKEIVASCDKCQLKGEAMHGQVDCSPGIWQLDCTHLEGKVILVAVHVASGYIEAEVIPAETGQETAYFLLKLAGRWPVKVVHTDNGSNFTSAAVKAACWWAGIKQEFGIPYNPQSQGVVESMNKELKKIIGQVRDQAEHLKTAVQMAVFIHNFKRRRGIGGYSAGERIIDIIATDIQTKELQKQIIKIQNFRVYYRDSRDPIWKGPAKLLWKGEGAVVIQDKSDIKVVPRRKVKIIRDYGKQMAGDDCVASRQDED.

Residue Gly2 is the site of N-myristoyl glycine; by host attachment. The segment at 7-31 (VLSGGKLDKWEKIRLRPGGKKKYRL) is interaction with Gp41. An interaction with host CALM1 region spans residues 8–43 (LSGGKLDKWEKIRLRPGGKKKYRLKHIVWASRELER). Residues 12–19 (KLDKWEKI) are interaction with host AP3D1. An interaction with membrane phosphatidylinositol 4,5-bisphosphate and RNA region spans residues 14–33 (DKWEKIRLRPGGKKKYRLKH). Positions 16–22 (WEKIRLR) match the Nuclear export signal motif. A Nuclear localization signal motif is present at residues 26-32 (KKKYRLK). Residues 73 to 77 (EELRS) are interaction with membrane phosphatidylinositol 4,5-bisphosphate. Positions 102–128 (EKMEEEQNKSKKKAQQAAADTGNNSQV) are disordered. Tyr132 carries the post-translational modification Phosphotyrosine; by host. An interaction with human PPIA/CYPA and NUP153 region spans residues 189-227 (NTVGGHQAAMQMLKETINEEAAEWDRLHPVHAGPIAPGQ). The interval 277 to 363 (YSPVSILDIR…GGPSHKARVL (87 aa)) is dimerization/Multimerization of capsid protein p24. 2 CCHC-type zinc fingers span residues 391–408 (IKCFNCGKEGHIAKNCRA) and 412–429 (KGCWRCGKEGHQLKDCTE). The interval 489-493 (PQITL) is dimerization of protease. Residues 508-577 (KEALLDTGAD…TPVNIIGRNL (70 aa)) form the Peptidase A2 domain. Asp513 (for protease activity; shared with dimeric partner) is an active-site residue. Dimerization of protease stretches follow at residues 537–543 (GIGGFIK) and 576–588 (NLLTQIGCTLNFP). Positions 631 to 821 (EGKISRIGPE…PPFLWMGYEL (191 aa)) constitute a Reverse transcriptase domain. The Mg(2+) site is built by Asp697, Asp772, and Asp773. The interval 814–822 (FLWMGYELH) is RT 'primer grip'. The Tryptophan repeat motif motif lies at 985-1001 (WETWWAEYWQATWIPEW). The 124-residue stretch at 1021–1144 (IIGAETFYVD…VDKLVSQGIR (124 aa)) folds into the RNase H type-1 domain. Residues Asp1030, Glu1065, Asp1085, and Asp1136 each coordinate Mg(2+). An Integrase-type zinc finger spans residues 1150–1191 (DGIDKAQEEHEKYHNNWRAMASDFNLPPVVAKEIVASCDKCQ). Zn(2+)-binding residues include His1159, His1163, Cys1187, and Cys1190. The 151-residue stretch at 1201-1351 (VDCSPGIWQL…SAGERIIDII (151 aa)) folds into the Integrase catalytic domain. 3 residues coordinate Mg(2+): Asp1211, Asp1263, and Glu1299. The segment at residues 1370-1417 (FRVYYRDSRDPIWKGPAKLLWKGEGAVVIQDKSDIKVVPRRKVKIIRD) is a DNA-binding region (integrase-type).

In terms of assembly, homotrimer; further assembles as hexamers of trimers. Interacts with gp41 (via C-terminus). Interacts with host CALM1; this interaction induces a conformational change in the Matrix protein, triggering exposure of the myristate group. Interacts with host AP3D1; this interaction allows the polyprotein trafficking to multivesicular bodies during virus assembly. Part of the pre-integration complex (PIC) which is composed of viral genome, matrix protein, Vpr and integrase. As to quaternary structure, homodimer; the homodimer further multimerizes as homohexamers or homopentamers. Interacts with human PPIA/CYPA; This interaction stabilizes the capsid. Interacts with human NUP153. Interacts with host PDZD8; this interaction stabilizes the capsid. Interacts with monkey TRIM5; this interaction destabilizes the capsid. Homodimer, whose active site consists of two apposed aspartic acid residues. In terms of assembly, heterodimer of p66 RT and p51 RT (RT p66/p51). Heterodimerization of RT is essential for DNA polymerase activity. The overall folding of the subdomains is similar in p66 RT and p51 RT but the spatial arrangements of the subdomains are dramatically different. As to quaternary structure, homotetramer; may further associate as a homohexadecamer. Part of the pre-integration complex (PIC) which is composed of viral genome, matrix protein, Vpr and integrase. Interacts with human SMARCB1/INI1 and human PSIP1/LEDGF isoform 1. Interacts with human KPNA3; this interaction might play a role in nuclear import of the pre-integration complex. Interacts with human NUP153; this interaction might play a role in nuclear import of the pre-integration complex. Mg(2+) is required as a cofactor. Post-translationally, specific enzymatic cleavages by the viral protease yield mature proteins. The protease is released by autocatalytic cleavage. The polyprotein is cleaved during and after budding, this process is termed maturation. Proteolytic cleavage of p66 RT removes the RNase H domain to yield the p51 RT subunit. Nucleocapsid protein p7 might be further cleaved after virus entry. Tyrosine phosphorylated presumably in the virion by a host kinase. Phosphorylation is apparently not a major regulator of membrane association. In terms of processing, phosphorylated possibly by host MAPK1; this phosphorylation is necessary for Pin1-mediated virion uncoating. Post-translationally, methylated by host PRMT6, impairing its function by reducing RNA annealing and the initiation of reverse transcription.

The protein localises to the host cell membrane. It is found in the host endosome. It localises to the host multivesicular body. The protein resides in the virion membrane. Its subcellular location is the host nucleus. The protein localises to the host cytoplasm. It is found in the virion. It carries out the reaction Specific for a P1 residue that is hydrophobic, and P1' variable, but often Pro.. It catalyses the reaction Endohydrolysis of RNA in RNA/DNA hybrids. Three different cleavage modes: 1. sequence-specific internal cleavage of RNA. Human immunodeficiency virus type 1 and Moloney murine leukemia virus enzymes prefer to cleave the RNA strand one nucleotide away from the RNA-DNA junction. 2. RNA 5'-end directed cleavage 13-19 nucleotides from the RNA end. 3. DNA 3'-end directed cleavage 15-20 nucleotides away from the primer terminus.. The catalysed reaction is 3'-end directed exonucleolytic cleavage of viral RNA-DNA hybrid.. The enzyme catalyses DNA(n) + a 2'-deoxyribonucleoside 5'-triphosphate = DNA(n+1) + diphosphate. With respect to regulation, protease: The viral protease is inhibited by many synthetic protease inhibitors (PIs), such as amprenavir, atazanavir, indinavir, loprinavir, nelfinavir, ritonavir and saquinavir. Use of protease inhibitors in tritherapy regimens permit more ambitious therapeutic strategies. Reverse transcriptase/ribonuclease H: RT can be inhibited either by nucleoside RT inhibitors (NRTIs) or by non nucleoside RT inhibitors (NNRTIs). NRTIs act as chain terminators, whereas NNRTIs inhibit DNA polymerization by binding a small hydrophobic pocket near the RT active site and inducing an allosteric change in this region. Classical NRTIs are abacavir, adefovir (PMEA), didanosine (ddI), lamivudine (3TC), stavudine (d4T), tenofovir (PMPA), zalcitabine (ddC), and zidovudine (AZT). Classical NNRTIs are atevirdine (BHAP U-87201E), delavirdine, efavirenz (DMP-266), emivirine (I-EBU), and nevirapine (BI-RG-587). The tritherapies used as a basic effective treatment of AIDS associate two NRTIs and one NNRTI. In terms of biological role, mediates, with Gag polyprotein, the essential events in virion assembly, including binding the plasma membrane, making the protein-protein interactions necessary to create spherical particles, recruiting the viral Env proteins, and packaging the genomic RNA via direct interactions with the RNA packaging sequence (Psi). Gag-Pol polyprotein may regulate its own translation, by the binding genomic RNA in the 5'-UTR. At low concentration, the polyprotein would promote translation, whereas at high concentration, the polyprotein would encapsidate genomic RNA and then shut off translation. Its function is as follows. Targets the polyprotein to the plasma membrane via a multipartite membrane-binding signal, that includes its myristoylated N-terminus. Matrix protein is part of the pre-integration complex. Implicated in the release from host cell mediated by Vpu. Binds to RNA. Forms the conical core that encapsulates the genomic RNA-nucleocapsid complex in the virion. Most core are conical, with only 7% tubular. The core is constituted by capsid protein hexamer subunits. The core is disassembled soon after virion entry. Host restriction factors such as TRIM5-alpha or TRIMCyp bind retroviral capsids and cause premature capsid disassembly, leading to blocks in reverse transcription. Capsid restriction by TRIM5 is one of the factors which restricts HIV-1 to the human species. Host PIN1 apparently facilitates the virion uncoating. On the other hand, interactions with PDZD8 or CYPA stabilize the capsid. Functionally, encapsulates and protects viral dimeric unspliced genomic RNA (gRNA). Binds these RNAs through its zinc fingers. Acts as a nucleic acid chaperone which is involved in rearangement of nucleic acid secondary structure during gRNA retrotranscription. Also facilitates template switch leading to recombination. As part of the polyprotein, participates in gRNA dimerization, packaging, tRNA incorporation and virion assembly. In terms of biological role, aspartyl protease that mediates proteolytic cleavages of Gag and Gag-Pol polyproteins during or shortly after the release of the virion from the plasma membrane. Cleavages take place as an ordered, step-wise cascade to yield mature proteins. This process is called maturation. Displays maximal activity during the budding process just prior to particle release from the cell. Also cleaves Nef and Vif, probably concomitantly with viral structural proteins on maturation of virus particles. Hydrolyzes host EIF4GI and PABP1 in order to shut off the capped cellular mRNA translation. The resulting inhibition of cellular protein synthesis serves to ensure maximal viral gene expression and to evade host immune response. Also mediates cleavage of host YTHDF3. Mediates cleavage of host CARD8, thereby activating the CARD8 inflammasome, leading to the clearance of latent HIV-1 in patient CD4(+) T-cells after viral reactivation; in contrast, HIV-1 can evade CARD8-sensing when its protease remains inactive in infected cells prior to viral budding. Its function is as follows. Multifunctional enzyme that converts the viral RNA genome into dsDNA in the cytoplasm, shortly after virus entry into the cell. This enzyme displays a DNA polymerase activity that can copy either DNA or RNA templates, and a ribonuclease H (RNase H) activity that cleaves the RNA strand of RNA-DNA heteroduplexes in a partially processive 3' to 5' endonucleasic mode. Conversion of viral genomic RNA into dsDNA requires many steps. A tRNA(3)-Lys binds to the primer-binding site (PBS) situated at the 5'-end of the viral RNA. RT uses the 3' end of the tRNA primer to perform a short round of RNA-dependent minus-strand DNA synthesis. The reading proceeds through the U5 region and ends after the repeated (R) region which is present at both ends of viral RNA. The portion of the RNA-DNA heteroduplex is digested by the RNase H, resulting in a ssDNA product attached to the tRNA primer. This ssDNA/tRNA hybridizes with the identical R region situated at the 3' end of viral RNA. This template exchange, known as minus-strand DNA strong stop transfer, can be either intra- or intermolecular. RT uses the 3' end of this newly synthesized short ssDNA to perform the RNA-dependent minus-strand DNA synthesis of the whole template. RNase H digests the RNA template except for two polypurine tracts (PPTs) situated at the 5'-end and near the center of the genome. It is not clear if both polymerase and RNase H activities are simultaneous. RNase H probably can proceed both in a polymerase-dependent (RNA cut into small fragments by the same RT performing DNA synthesis) and a polymerase-independent mode (cleavage of remaining RNA fragments by free RTs). Secondly, RT performs DNA-directed plus-strand DNA synthesis using the PPTs that have not been removed by RNase H as primers. PPTs and tRNA primers are then removed by RNase H. The 3' and 5' ssDNA PBS regions hybridize to form a circular dsDNA intermediate. Strand displacement synthesis by RT to the PBS and PPT ends produces a blunt ended, linear dsDNA copy of the viral genome that includes long terminal repeats (LTRs) at both ends. Catalyzes viral DNA integration into the host chromosome, by performing a series of DNA cutting and joining reactions. This enzyme activity takes place after virion entry into a cell and reverse transcription of the RNA genome in dsDNA. The first step in the integration process is 3' processing. This step requires a complex comprising the viral genome, matrix protein, Vpr and integrase. This complex is called the pre-integration complex (PIC). The integrase protein removes 2 nucleotides from each 3' end of the viral DNA, leaving recessed CA OH's at the 3' ends. In the second step, the PIC enters cell nucleus. This process is mediated through integrase and Vpr proteins, and allows the virus to infect a non dividing cell. This ability to enter the nucleus is specific of lentiviruses, other retroviruses cannot and rely on cell division to access cell chromosomes. In the third step, termed strand transfer, the integrase protein joins the previously processed 3' ends to the 5' ends of strands of target cellular DNA at the site of integration. The 5'-ends are produced by integrase-catalyzed staggered cuts, 5 bp apart. A Y-shaped, gapped, recombination intermediate results, with the 5'-ends of the viral DNA strands and the 3' ends of target DNA strands remaining unjoined, flanking a gap of 5 bp. The last step is viral DNA integration into host chromosome. This involves host DNA repair synthesis in which the 5 bp gaps between the unjoined strands are filled in and then ligated. Since this process occurs at both cuts flanking the HIV genome, a 5 bp duplication of host DNA is produced at the ends of HIV-1 integration. Alternatively, Integrase may catalyze the excision of viral DNA just after strand transfer, this is termed disintegration. This is Gag-Pol polyprotein (gag-pol) from Human immunodeficiency virus type 1 group M subtype D (isolate ELI) (HIV-1).